The primary structure comprises 251 residues: Imidazole glycerol phosphate synthase subunit HisF (251 aa).

Active-site residues include D12 and D131.

Belongs to the HisA/HisF family. In terms of assembly, heterodimer of HisH and HisF.

Its subcellular location is the cytoplasm. The catalysed reaction is 5-[(5-phospho-1-deoxy-D-ribulos-1-ylimino)methylamino]-1-(5-phospho-beta-D-ribosyl)imidazole-4-carboxamide + L-glutamine = D-erythro-1-(imidazol-4-yl)glycerol 3-phosphate + 5-amino-1-(5-phospho-beta-D-ribosyl)imidazole-4-carboxamide + L-glutamate + H(+). It participates in amino-acid biosynthesis; L-histidine biosynthesis; L-histidine from 5-phospho-alpha-D-ribose 1-diphosphate: step 5/9. Its function is as follows. IGPS catalyzes the conversion of PRFAR and glutamine to IGP, AICAR and glutamate. The HisF subunit catalyzes the cyclization activity that produces IGP and AICAR from PRFAR using the ammonia provided by the HisH subunit. The sequence is that of Imidazole glycerol phosphate synthase subunit HisF from Streptomyces griseus subsp. griseus (strain JCM 4626 / CBS 651.72 / NBRC 13350 / KCC S-0626 / ISP 5235).